The primary structure comprises 674 residues: MPRLRVYELAKKLNMSTKDLLQELEELGLNVKNHMSYIDEETVGLLLEIFEEEEETAAKAKAAKPKKEKEELEEIFQEVVLKPEDLQLNTLAVKIGVPLNRIIQDMFVKGIVLKPTQQIDEKTAKDIAKIYGYRAKFYQPEEEISELETIENELERLEKYFETLYETHKDELSIRPPVVTVMGHVDHGKTTLLDKIRRTRVAEKEVGGITQSIGAYQVVHKGKKITFIDTPGHELFTEMRAKGAQATDIVVLVVAADDGVMPQTIEAYNHAKVANVPVIVAINKIDKPNANIEATKRQLVDKLNIIPEDWGGDTITVPISARTGHGIDELLEMILLVAELREIKCYPKGPARCVIIESKLDRSLGPVANVIVKDGELRVGDYLVAGPTYCKVRILIDDKGKSIKIAEPSQPVMIVGFEEVPDIRYSIYAVESLESARTVTQQLKERLERDKMAKRRVRLEELLKMMEESEKKELNLVLKADTFGSLSAVQNAIASLKSEEIKINIVHSGVGTVNNSDVMLASASNGIIVGFRVKVDAQARKTAENEGIQIKTYEIIYDLLDNMKLALEGMLKPETVEELVGRGEIRKIFDIKKVGKIAGVQLLEGHVSKDCIVKVYRNGTFLFSDQIDSLKHYKEDVDKVSAPQECGLKLKSNEDLRENDELEFYEQHQVQKKL.

Residues Ile174–Lys344 form the tr-type G domain. Residues Gly183–Thr190 form a G1 region. Position 183 to 190 (Gly183 to Thr190) interacts with GTP. The segment at Gly208 to Ser212 is G2. The tract at residues Asp229 to Gly232 is G3. Residues Asp229–His233 and Asn283–Asp286 contribute to the GTP site. A G4 region spans residues Asn283–Asp286. The G5 stretch occupies residues Ser320–Arg322.

The protein belongs to the TRAFAC class translation factor GTPase superfamily. Classic translation factor GTPase family. IF-2 subfamily.

Its subcellular location is the cytoplasm. Functionally, one of the essential components for the initiation of protein synthesis. Protects formylmethionyl-tRNA from spontaneous hydrolysis and promotes its binding to the 30S ribosomal subunits. Also involved in the hydrolysis of GTP during the formation of the 70S ribosomal complex. The polypeptide is Translation initiation factor IF-2 (Pseudothermotoga lettingae (strain ATCC BAA-301 / DSM 14385 / NBRC 107922 / TMO) (Thermotoga lettingae)).